A 520-amino-acid polypeptide reads, in one-letter code: MAPVALLSVSDKSGLLPLAEALHRIHGYQLLSSGGTAKVLEQAGLPVTRVSEYTGAPEILGGRVKTLHPRVHGGILAKRGDAAHQNDLEQQNINFIDVVVVNLYPFRETVAKADVTWDQAIENIDIGGPTMVRSAAKNHADVAVLTSPDQYDRLLEAMAQAGGEVPAALRRQLALEAFQHTAAYDTAISRWMDQAVAADGSPWLEAVPLRQTLRYGENPHQKARWYSHAQQGWGGAVQLQGKELSTNNLLDLEAALAMVREFGYGSDGAEPAVQPAAVVVKHTNPCGVAIGSDVSTALTRALDADRVSAFGGIVAINGVVSAAAAGELKSLFLECVVAPSFSPEAREILAAKANLRLLELQPAAIDAAGPDHVRSILGGLLVQDLDDQAITPSEWTVASQRPPSSQEQQDLEFAWRLVRHVRSNAIVVASKGQSLGIGAGQMNRVGSARLALDAAGDQATGAVLASDGFFPFDDTVRLAASHGITAVIHPGGSLRDADSIKACDELGLAMLLTGRRHFLH.

The region spanning 1 to 146 (MAPVALLSVS…KNHADVAVLT (146 aa)) is the MGS-like domain.

Belongs to the PurH family.

It catalyses the reaction (6R)-10-formyltetrahydrofolate + 5-amino-1-(5-phospho-beta-D-ribosyl)imidazole-4-carboxamide = 5-formamido-1-(5-phospho-D-ribosyl)imidazole-4-carboxamide + (6S)-5,6,7,8-tetrahydrofolate. The catalysed reaction is IMP + H2O = 5-formamido-1-(5-phospho-D-ribosyl)imidazole-4-carboxamide. The protein operates within purine metabolism; IMP biosynthesis via de novo pathway; 5-formamido-1-(5-phospho-D-ribosyl)imidazole-4-carboxamide from 5-amino-1-(5-phospho-D-ribosyl)imidazole-4-carboxamide (10-formyl THF route): step 1/1. It functions in the pathway purine metabolism; IMP biosynthesis via de novo pathway; IMP from 5-formamido-1-(5-phospho-D-ribosyl)imidazole-4-carboxamide: step 1/1. The protein is Bifunctional purine biosynthesis protein PurH of Synechococcus sp. (strain CC9902).